A 710-amino-acid chain; its full sequence is Probable inactive DNA (cytosine-5)-methyltransferase DRM3 (710 aa).

Positions 1 to 21 are disordered; the sequence is MADMRRRNGSGGSSNHERNEQ. A UBA 1 domain is found at 52–92; the sequence is SGSNVKSLLIEMGFCPTLVQKAIDENGQDDFELLLEILTKS. The span at 167 to 184 shows a compositional bias: acidic residues; that stretch reads ESEDSLDGAEINEEDEDV. The interval 167-192 is disordered; it reads ESEDSLDGAEINEEDEDVTPVTARGP. The UBA 2 domain occupies 198 to 242; it reads QLFETMDKTLRLLEMGFSNDEISMAIEKIGTKGQISVLAESIVTG. The segment at 282–360 is disordered; sequence AQKEDGGGGS…MGDSSSFMET (79 aa). The segment covering 339–350 has biased composition (basic and acidic residues); that stretch reads YDDRGKRLRPED. Residues 379 to 710 form the SAM-dependent MTase DRM-type domain; sequence QPRLSQSLGP…RVTKRVRDMM (332 aa).

The protein belongs to the class I-like SAM-binding methyltransferase superfamily. DRM-methyltransferase family. As to quaternary structure, interacts with Pol V.

It is found in the nucleus. In terms of biological role, catalytically inactive DNA methyltransferase that acts as regulatory factor for DRM2-mediated DNA methylation. Required for maintenance of non-CpG DNA methylation. Required for normal establishment and maintenance of RNA-directed DNA methylation (RdDM) and accumulation of specific repeat-associated small interfering RNAs (siRNAs). Required for nucleolus organizer region (NOR) nuclear organization during interphase. Acts downstream of the production of siRNAs. May promote RNA polymerase V (Pol V) transcriptional elongation or assist in the stabilization of Pol V transcripts. This chain is Probable inactive DNA (cytosine-5)-methyltransferase DRM3, found in Arabidopsis thaliana (Mouse-ear cress).